We begin with the raw amino-acid sequence, 699 residues long: D-(-)-3-hydroxybutyrate oligomer hydrolase (699 aa).

An N-terminal signal peptide occupies residues methionine 1–alanine 33. Catalysis depends on serine 311, which acts as the Charge relay system.

This sequence belongs to the D-(-)-3-hydroxybutyrate oligomer hydrolase family.

The protein localises to the secreted. It catalyses the reaction (3R)-hydroxybutanoate dimer + H2O = 2 (R)-3-hydroxybutanoate + H(+). It participates in lipid metabolism; butanoate metabolism. In terms of biological role, participates in the degradation of poly-3-hydroxybutyrate (PHB). It works downstream of poly(3-hydroxybutyrate) depolymerase, hydrolyzing D(-)-3-hydroxybutyrate oligomers of various length (3HB-oligomers) into 3HB-monomers. The protein is D-(-)-3-hydroxybutyrate oligomer hydrolase of Burkholderia mallei (strain SAVP1).